The following is a 542-amino-acid chain: CTP synthase (542 aa).

Residues 1–265 (MARYVFITGG…DDEVLAAFGI (265 aa)) form an amidoligase domain region. Residue Ser-13 participates in CTP binding. Residue Ser-13 participates in UTP binding. ATP-binding positions include 14 to 19 (SLGKGI) and Asp-71. The Mg(2+) site is built by Asp-71 and Glu-139. CTP-binding positions include 146-148 (DIE), 186-191 (KTKPTQ), and Lys-222. UTP is bound by residues 186 to 191 (KTKPTQ) and Lys-222. In terms of domain architecture, Glutamine amidotransferase type-1 spans 291 to 541 (TIAIVGKYTG…IEAATEQSRL (251 aa)). Gly-353 is an L-glutamine binding site. Cys-380 functions as the Nucleophile; for glutamine hydrolysis in the catalytic mechanism. L-glutamine-binding positions include 381–384 (FGMQ), Glu-404, and Arg-469. Active-site residues include His-514 and Glu-516.

This sequence belongs to the CTP synthase family. In terms of assembly, homotetramer.

The catalysed reaction is UTP + L-glutamine + ATP + H2O = CTP + L-glutamate + ADP + phosphate + 2 H(+). It catalyses the reaction L-glutamine + H2O = L-glutamate + NH4(+). The enzyme catalyses UTP + NH4(+) + ATP = CTP + ADP + phosphate + 2 H(+). It functions in the pathway pyrimidine metabolism; CTP biosynthesis via de novo pathway; CTP from UDP: step 2/2. With respect to regulation, allosterically activated by GTP, when glutamine is the substrate; GTP has no effect on the reaction when ammonia is the substrate. The allosteric effector GTP functions by stabilizing the protein conformation that binds the tetrahedral intermediate(s) formed during glutamine hydrolysis. Inhibited by the product CTP, via allosteric rather than competitive inhibition. Its function is as follows. Catalyzes the ATP-dependent amination of UTP to CTP with either L-glutamine or ammonia as the source of nitrogen. Regulates intracellular CTP levels through interactions with the four ribonucleotide triphosphates. This chain is CTP synthase, found in Rhizobium johnstonii (strain DSM 114642 / LMG 32736 / 3841) (Rhizobium leguminosarum bv. viciae).